A 336-amino-acid polypeptide reads, in one-letter code: Methionine import ATP-binding protein MetN (336 aa).

The ABC transporter domain occupies 2–254 (IKIKNLKKYY…PNAKMKEFLG (253 aa)). 34 to 41 (GHSGAGKS) is a binding site for ATP.

The protein belongs to the ABC transporter superfamily. Methionine importer (TC 3.A.1.24) family. In terms of assembly, the complex is composed of two ATP-binding proteins (MetN), two transmembrane proteins (MetI) and a solute-binding protein (MetQ).

Its subcellular location is the cell inner membrane. It catalyses the reaction L-methionine(out) + ATP + H2O = L-methionine(in) + ADP + phosphate + H(+). It carries out the reaction D-methionine(out) + ATP + H2O = D-methionine(in) + ADP + phosphate + H(+). Its function is as follows. Part of the ABC transporter complex MetNIQ involved in methionine import. Responsible for energy coupling to the transport system. The protein is Methionine import ATP-binding protein MetN of Campylobacter jejuni subsp. jejuni serotype O:2 (strain ATCC 700819 / NCTC 11168).